A 484-amino-acid chain; its full sequence is 6-phosphogluconate dehydrogenase, decarboxylating (484 aa).

NADP(+)-binding positions include 11-16 (GLAVMG), 34-36 (NRT), 76-78 (VRA), and Asn104. Residues Asn104 and 130–132 (SGG) contribute to the substrate site. Catalysis depends on Lys185, which acts as the Proton acceptor. Residue 188-189 (HN) coordinates substrate. Glu192 acts as the Proton donor in catalysis. Positions 193, 262, 289, 447, and 453 each coordinate substrate.

The protein belongs to the 6-phosphogluconate dehydrogenase family. As to quaternary structure, homodimer.

It catalyses the reaction 6-phospho-D-gluconate + NADP(+) = D-ribulose 5-phosphate + CO2 + NADPH. The protein operates within carbohydrate degradation; pentose phosphate pathway; D-ribulose 5-phosphate from D-glucose 6-phosphate (oxidative stage): step 3/3. Catalyzes the oxidative decarboxylation of 6-phosphogluconate to ribulose 5-phosphate and CO(2), with concomitant reduction of NADP to NADPH. This chain is 6-phosphogluconate dehydrogenase, decarboxylating, found in Aggregatibacter actinomycetemcomitans (Actinobacillus actinomycetemcomitans).